We begin with the raw amino-acid sequence, 61 residues long: Photosystem II reaction center protein K (61 aa).

The propeptide occupies 1-24; it reads MPNIFSLICICLNSALQPSGFFFA. A helical transmembrane segment spans residues 36–56; sequence IVDFMPVIPVLFFLLAFVWQA.

It belongs to the PsbK family. PSII is composed of 1 copy each of membrane proteins PsbA, PsbB, PsbC, PsbD, PsbE, PsbF, PsbH, PsbI, PsbJ, PsbK, PsbL, PsbM, PsbT, PsbX, PsbY, PsbZ, Psb30/Ycf12, at least 3 peripheral proteins of the oxygen-evolving complex and a large number of cofactors. It forms dimeric complexes.

It is found in the plastid. Its subcellular location is the chloroplast thylakoid membrane. Functionally, one of the components of the core complex of photosystem II (PSII). PSII is a light-driven water:plastoquinone oxidoreductase that uses light energy to abstract electrons from H(2)O, generating O(2) and a proton gradient subsequently used for ATP formation. It consists of a core antenna complex that captures photons, and an electron transfer chain that converts photonic excitation into a charge separation. In Nymphaea alba (White water-lily), this protein is Photosystem II reaction center protein K.